Consider the following 1461-residue polypeptide: Periaxin (1461 aa).

S7 carries the phosphoserine modification. The PDZ domain occupies 16–99; sequence LVEIIVETEA…YKVSFCLKRT (84 aa). The Nuclear export signal signature appears at 70 to 84; it reads VFFENFKYEDALRLL. A Nuclear localization signal motif is present at residues 118 to 196; sequence KGPRAKVAKL…RLQLPRLRVR (79 aa). S133 bears the Phosphoserine mark. Tandem repeats lie at residues 431–435, 439–443, 447–451, 455–459, 463–467, 468–472, 473–477, 481–485, 486–490, 494–498, 499–503, 507–511, 512–516, 520–524, 525–529, 533–537, 538–542, 546–550, 551–555, 559–563, 564–568, 572–576, 577–581, 582–586, 590–594, 595–599, 600–604, 608–612, 613–617, 618–622, 626–630, 631–635, 636–640, 644–648, 649–653, 654–658, 662–666, 670–674, 675–679, 683–687, 688–692, 696–700, 701–705, 706–710, 714–718, 719–723, 724–728, 732–736, 737–741, 742–746, 750–754, 755–759, 760–764, 771–775, and 779–783. Residues 431–783 are 55 X 5 AA approximate tandem repeats of [LVMAG]-[PSREQC]-[EDKL]-[LIVMAP]-[AQKHRPE]; that may have a tripeptide spacer of [LV]-P-[KER]; it reads GPEVKVPKGP…VKLPRAPEVQ (353 aa). A phosphoserine mark is found at S900 and S1082. The span at 1318–1327 shows a compositional bias: basic and acidic residues; it reads EGAEEGEKAK. Residues 1318–1461 form a disordered region; that stretch reads EGAEEGEKAK…RMEGAQAAAV (144 aa). Phosphoserine occurs at positions 1349, 1351, 1363, 1401, 1407, and 1439. A compositionally biased stretch (acidic residues) spans 1352–1363; the sequence is PEEEEEEEEEGS.

Belongs to the periaxin family. In terms of assembly, homodimer (via PDZ domain). Interacts with SCN10A. Found in a complex with SCN10A. Interacts with DRP2. Identified in a dystroglycan complex that contains at least PRX, DRP2, UTRN, DMD and DAG1. Detected in a complex composed of at least EZR, AHNAK, PPL and PRX. Identified in a complex with EZR, AHNAK, BFSP1, BFSP2, ANK2, PLEC, VIM and spectrin. Detected in spinal cord. Isoform 1 and isoform 2 are found in sciatic nerve and Schwann cells.

It is found in the cell membrane. The protein localises to the nucleus. Its subcellular location is the cytoplasm. It localises to the cell junction. Its function is as follows. Scaffolding protein that functions as part of a dystroglycan complex in Schwann cells, and as part of EZR and AHNAK-containing complexes in eye lens fiber cells. Required for the maintenance of the peripheral myelin sheath that is essential for normal transmission of nerve impulses and normal perception of sensory stimuli. Required for normal transport of MBP mRNA from the perinuclear to the paranodal regions. Required for normal remyelination after nerve injury. Required for normal elongation of Schwann cells and normal length of the internodes between the nodes of Ranvier. The demyelinated nodes of Ranvier permit saltatory transmission of nerve impulses; shorter internodes cause slower transmission of nerve impulses. Required for the formation of appositions between the abaxonal surface of the myelin sheath and the Schwann cell plasma membrane; the Schwann cell cytoplasm is restricted to regions between these appositions. Required for the formation of Cajal bands and of Schmidt-Lanterman incisures that correspond to short, cytoplasm-filled regions on myelinated nerves. Recruits DRP2 to the Schwann cell plasma membrane. Required for normal protein composition of the eye lens fiber cell plasma membrane and normal eye lens fiber cell morphology. The polypeptide is Periaxin (PRX) (Homo sapiens (Human)).